We begin with the raw amino-acid sequence, 114 residues long: MSQAELSTCSAPQTQRIFQEAVRKGNTQELQSLLQNMTNCEFNVNSFGPEGQTALHQSVIDGNLELVKLLVKFGADIRLANRDGWSALHIAAFGGHQDIVLYLITKAKYAASGR.

ANK repeat units lie at residues 50–79 and 83–112; these read EGQT…DIRL and DGWS…YAAS.

This sequence belongs to the NRARP family. Interacts with LEF1.

Functionally, downstream effector of Notch signaling. Involved in the regulation of liver cancer cells self-renewal. Involved in angiogenesis acting downstream of Notch at branch points to regulate vascular density. Proposed to integrate endothelial Notch and Wnt signaling to control stalk cell proliferation and to stablilize new endothelial connections during angiogenesis. During somitogenesis involved in maintenance of proper somite segmentation and proper numbers of somites and vertebrae. Required for proper anterior-posterior somite patterning. Proposed to function in a negative feedback loop to destabilize Notch 1 intracellular domain (NICD) and down-regulate the Notch signal, preventing expansion of the Notch signal into the anterior somite domain. The chain is Notch-regulated ankyrin repeat-containing protein (NRARP) from Homo sapiens (Human).